We begin with the raw amino-acid sequence, 230 residues long: 2-phytyl-1,4-naphtoquinone methyltransferase (230 aa).

It belongs to the class I-like SAM-binding methyltransferase superfamily. MenG/UbiE family.

The catalysed reaction is demethylphylloquinol + S-adenosyl-L-methionine = phylloquinol + S-adenosyl-L-homocysteine + H(+). It participates in cofactor biosynthesis; phylloquinone biosynthesis. Functionally, methyltransferase required for the conversion of 2-phytyl-1,4-beta-naphthoquinol to phylloquinol. In Nostoc punctiforme (strain ATCC 29133 / PCC 73102), this protein is 2-phytyl-1,4-naphtoquinone methyltransferase.